The primary structure comprises 347 residues: UDP-N-acetylenolpyruvoylglucosamine reductase (347 aa).

Positions 33–221 (AGGSAERIYL…SGAWFALPRD (189 aa)) constitute an FAD-binding PCMH-type domain. Arg-180 is an active-site residue. Ser-250 serves as the catalytic Proton donor. Glu-320 is a catalytic residue.

Belongs to the MurB family. Requires FAD as cofactor.

It localises to the cytoplasm. It catalyses the reaction UDP-N-acetyl-alpha-D-muramate + NADP(+) = UDP-N-acetyl-3-O-(1-carboxyvinyl)-alpha-D-glucosamine + NADPH + H(+). It functions in the pathway cell wall biogenesis; peptidoglycan biosynthesis. Cell wall formation. The chain is UDP-N-acetylenolpyruvoylglucosamine reductase from Nitrosospira multiformis (strain ATCC 25196 / NCIMB 11849 / C 71).